Reading from the N-terminus, the 715-residue chain is Dynein axonemal intermediate chain 7 (715 aa).

Residues 291–322 form a disordered region; it reads AVSKDLQEENKQENESNSVHEEETKAEGQGDV. Positions 295 to 318 are enriched in basic and acidic residues; sequence DLQEENKQENESNSVHEEETKAEG.

Belongs to the DNAI7 family. Part of the multisubunit axonemal dynein complex formed at least of two heavy chains and a number of intermediate and light chains. Associates with tubulin. Interacts with microtubule. Ubiquitinated. Ubiquitination leads to its degradation through the 26S proteasome. Ubiquitin-proteasome-mediated DNAI7 degradation occurs in mitosis.

The protein localises to the cell projection. The protein resides in the cilium. It is found in the cytoplasm. Functionally, via its association with the multisubunit axonemal dynein complex, is potentially involved in the regulation of cilia function. May act as a cell cycle regulator. The chain is Dynein axonemal intermediate chain 7 from Bos taurus (Bovine).